The chain runs to 1653 residues: Ciliary rootlet coiled-coil protein 2 (1653 aa).

The segment covering 1–17 (MSSASSEPGNGDASQQP) has biased composition (polar residues). The tract at residues 1-57 (MSSASSEPGNGDASQQPLLGLDTVIQRLEDTILSPTASREDRALTVRGEGRQASPTP) is disordered. A compositionally biased stretch (basic and acidic residues) spans 38 to 50 (SREDRALTVRGEG). Coiled coils occupy residues 86–145 (VARV…SELE) and 310–351 (KVAL…LVAQ). Positions 367-396 (LGEPRRPLRSPQRATSPHQGASPPHICSPA) are disordered. The stretch at 423 to 1215 (LKSSQALVAS…QRKLAEVEAA (793 aa)) forms a coiled coil. The tract at residues 1302-1356 (GLQRQSPWASPEQPGSPTKGSDSSQALPGQQGTSPPARPHSPLRWPSPTPGGRSS) is disordered. The span at 1304–1335 (QRQSPWASPEQPGSPTKGSDSSQALPGQQGTS) shows a compositional bias: polar residues. A coiled-coil region spans residues 1361–1570 (VATVQDILRD…QAQMTEMEQA (210 aa)).

This sequence belongs to the rootletin family.

This chain is Ciliary rootlet coiled-coil protein 2, found in Homo sapiens (Human).